A 378-amino-acid chain; its full sequence is Mannitol-1-phosphate 5-dehydrogenase (378 aa).

NAD(+) is bound at residue 4–15 (SVHFGAGNIGRG).

This sequence belongs to the mannitol dehydrogenase family.

It catalyses the reaction D-mannitol 1-phosphate + NAD(+) = beta-D-fructose 6-phosphate + NADH + H(+). This is Mannitol-1-phosphate 5-dehydrogenase from Streptococcus pneumoniae serotype 4 (strain ATCC BAA-334 / TIGR4).